A 330-amino-acid polypeptide reads, in one-letter code: Atypical chemokine receptor 1 (330 aa).

The Extracellular portion of the chain corresponds to M1 to P57. N-linked (GlcNAc...) asparagine glycosylation is found at N12, N35, and N52. 2 disulfides stabilise this stretch: C45–C270 and C123–C189. A helical transmembrane segment spans residues F58–L78. Residues R79–D89 lie on the Cytoplasmic side of the membrane. The chain crosses the membrane as a helical span at residues R90–L110. Residues A111–C123 lie on the Extracellular side of the membrane. Residues H124–L147 form a helical membrane-spanning segment. Over G148 to R160 the chain is Cytoplasmic. A helical membrane pass occupies residues L161–G181. Residues S182–R201 lie on the Extracellular side of the membrane. A helical membrane pass occupies residues Y202–T222. At K223 to D238 the chain is on the cytoplasmic side. The chain crosses the membrane as a helical span at residues V239–L259. The Extracellular segment spans residues V260–D281. A helical transmembrane segment spans residues V282 to C302. The Cytoplasmic portion of the chain corresponds to Y303–S330.

This sequence belongs to the G-protein coupled receptor 1 family. Atypical chemokine receptor subfamily.

Its subcellular location is the early endosome. The protein resides in the recycling endosome. It is found in the membrane. Atypical chemokine receptor that controls chemokine levels and localization via high-affinity chemokine binding that is uncoupled from classic ligand-driven signal transduction cascades, resulting instead in chemokine sequestration, degradation, or transcytosis. Also known as interceptor (internalizing receptor) or chemokine-scavenging receptor or chemokine decoy receptor. Has a promiscuous chemokine-binding profile, interacting with inflammatory chemokines of both the CXC and the CC subfamilies but not with homeostatic chemokines. Acts as a receptor for chemokines including CCL2, CCL5, CCL7, CCL11, CCL13, CCL14, CCL17, CXCL5, CXCL6, IL8/CXCL8, CXCL11, GRO, RANTES, MCP-1 and TARC. May regulate chemokine bioavailability and, consequently, leukocyte recruitment through two distinct mechanisms: when expressed in endothelial cells, it sustains the abluminal to luminal transcytosis of tissue-derived chemokines and their subsequent presentation to circulating leukocytes; when expressed in erythrocytes, serves as blood reservoir of cognate chemokines but also as a chemokine sink, buffering potential surges in plasma chemokine levels. This Bos taurus (Bovine) protein is Atypical chemokine receptor 1 (ACKR1).